The primary structure comprises 964 residues: MSDKTNDDKTLSVNTKKTLTMKRPGVEQSTVRQNFSHGRTKAVVVETKKRKFSRPDEKPEVEAAAPKPAAPAPAAPAPAASTPAPAQAAQPAQAAPVVRAPAPATPAPKPAAPAAPVTKPHVAQQRPAQQRPGGQQAQRPRPSDRSGMVLNTLSRSEMDARRRALEEAQVREVEERARAVEEAKRRAEEDARRAKEREESARRQAEEEARLKAEADARRKAEEEAAKRMPQPEARTERRDDARPAPQGNRPQQAGRPQGNRPPQGGRPQQGGPRPAAPSLADAAPIPGKPLPQSQLRKTVASDDDDRRGGGLTAARRGAPAKPEVRAPKVVKTEDDRRRGKLTISSNLEDEGRSRSLSAMRRRQEKFKRSQMQETREKISREVTIPETITLQELAQRMTERSVDIIKYLMKQGQMMKPGDVIDADMAQLIAEEFGHTVKRVAESDVEEGIFGVADNEAALVSRPPVVTIMGHVDHGKTSLLDAIRHANVVSGEAGGITQHIGAYQVEQNGQKITFIDTPGHAAFTAMRARGAQATDIAILVVAADDSVMPQTIESINHAKAAGVPIIVAINKIDKPAADPQKVRTALLQHDVFVESMGGEVLDVEVSAKNKLNLDKLLEAILLQAEILDLKADPSRTAEGVVVEAQLDRGRGSVATVLVQTGTLHPGDILVAGSEWGRVRALVNDRGEHVKEAGPAMPVEVLGLQGTPQAGDRFAVVANEAKAREIAEYRQRLARDKAVARQSGARGSLEQMMNQLQVSGTKEFPLVIKGDVQGSIEAITNALDKLGTDEVRARIVHSGAGGITESDVSLAEASNAAIIGFNVRANKQARDAADQQGIEIRYYNIIYDLIDDVKAAMSGLLSPERRETFLGNAEILEVFNITKVGKVAGCRVTEGKVERGAGVRLIRDNVVIHEGKLKTLKRFKDEVSEVPAGQECGMAFENYDDIRAGDVIEAFRVEHVSRTL.

Residues 1-10 (MSDKTNDDKT) are compositionally biased toward basic and acidic residues. Residues 1–379 (MSDKTNDDKT…SQMQETREKI (379 aa)) form a disordered region. Over residues 27–37 (EQSTVRQNFSH) the composition is skewed to polar residues. Residues 77-102 (APAASTPAPAQAAQPAQAAPVVRAPA) are compositionally biased toward low complexity. Over residues 103–113 (PATPAPKPAAP) the composition is skewed to pro residues. The span at 114–140 (AAPVTKPHVAQQRPAQQRPGGQQAQRP) shows a compositional bias: low complexity. 2 stretches are compositionally biased toward basic and acidic residues: residues 156 to 227 (SEMD…EAAK) and 234 to 243 (ARTERRDDAR). Residues 250-278 (RPQQAGRPQGNRPPQGGRPQQGGPRPAAP) show a composition bias toward low complexity. The segment covering 323 to 338 (PEVRAPKVVKTEDDRR) has biased composition (basic and acidic residues). The tr-type G domain occupies 462–629 (SRPPVVTIMG…AILLQAEILD (168 aa)). Positions 471–478 (GHVDHGKT) are G1. Residue 471-478 (GHVDHGKT) participates in GTP binding. The segment at 496–500 (GITQH) is G2. A G3 region spans residues 517–520 (DTPG). GTP contacts are provided by residues 517 to 521 (DTPGH) and 571 to 574 (NKID). Positions 571–574 (NKID) are G4. A G5 region spans residues 607-609 (SAK).

Belongs to the TRAFAC class translation factor GTPase superfamily. Classic translation factor GTPase family. IF-2 subfamily.

The protein localises to the cytoplasm. Functionally, one of the essential components for the initiation of protein synthesis. Protects formylmethionyl-tRNA from spontaneous hydrolysis and promotes its binding to the 30S ribosomal subunits. Also involved in the hydrolysis of GTP during the formation of the 70S ribosomal complex. The chain is Translation initiation factor IF-2 from Brucella anthropi (strain ATCC 49188 / DSM 6882 / CCUG 24695 / JCM 21032 / LMG 3331 / NBRC 15819 / NCTC 12168 / Alc 37) (Ochrobactrum anthropi).